Consider the following 357-residue polypeptide: UDP-N-acetylglucosamine--N-acetylmuramyl-(pentapeptide) pyrophosphoryl-undecaprenol N-acetylglucosamine transferase (357 aa).

Residues 13–15, N125, R161, S189, I243, and Q288 each bind UDP-N-acetyl-alpha-D-glucosamine; that span reads TGG.

This sequence belongs to the glycosyltransferase 28 family. MurG subfamily.

It localises to the cell inner membrane. It catalyses the reaction di-trans,octa-cis-undecaprenyl diphospho-N-acetyl-alpha-D-muramoyl-L-alanyl-D-glutamyl-meso-2,6-diaminopimeloyl-D-alanyl-D-alanine + UDP-N-acetyl-alpha-D-glucosamine = di-trans,octa-cis-undecaprenyl diphospho-[N-acetyl-alpha-D-glucosaminyl-(1-&gt;4)]-N-acetyl-alpha-D-muramoyl-L-alanyl-D-glutamyl-meso-2,6-diaminopimeloyl-D-alanyl-D-alanine + UDP + H(+). The protein operates within cell wall biogenesis; peptidoglycan biosynthesis. Functionally, cell wall formation. Catalyzes the transfer of a GlcNAc subunit on undecaprenyl-pyrophosphoryl-MurNAc-pentapeptide (lipid intermediate I) to form undecaprenyl-pyrophosphoryl-MurNAc-(pentapeptide)GlcNAc (lipid intermediate II). The protein is UDP-N-acetylglucosamine--N-acetylmuramyl-(pentapeptide) pyrophosphoryl-undecaprenol N-acetylglucosamine transferase of Polynucleobacter asymbioticus (strain DSM 18221 / CIP 109841 / QLW-P1DMWA-1) (Polynucleobacter necessarius subsp. asymbioticus).